Reading from the N-terminus, the 182-residue chain is Peptidyl-prolyl cis-trans isomerase C, mitochondrial (182 aa).

The transit peptide at 1–20 directs the protein to the mitochondrion; sequence MFKRSIIQQSRLFSNSASRL. Residues 25–181 form the PPIase cyclophilin-type domain; that stretch reads FFDPAVNGTK…AEIVIEEAGE (157 aa).

It belongs to the cyclophilin-type PPIase family.

Its subcellular location is the mitochondrion matrix. The catalysed reaction is [protein]-peptidylproline (omega=180) = [protein]-peptidylproline (omega=0). Its activity is regulated as follows. Inhibited by the immunosuppressant drug cyclosporin A and by SDZ NIM811, a PPIase inhibitor. PPIases accelerate the folding of proteins. It catalyzes the cis-trans isomerization of proline imidic peptide bonds in oligopeptides. This isozyme is required for growth on lactate at high temperature. The chain is Peptidyl-prolyl cis-trans isomerase C, mitochondrial (CPR3) from Saccharomyces cerevisiae (strain ATCC 204508 / S288c) (Baker's yeast).